Reading from the N-terminus, the 450-residue chain is Tubulin alpha-6 chain (450 aa).

Positions 11, 71, 144, 145, 179, 206, and 228 each coordinate GTP. Glu71 contacts Mg(2+). Residue Glu254 is part of the active site.

The protein belongs to the tubulin family. As to quaternary structure, dimer of alpha and beta chains. A typical microtubule is a hollow water-filled tube with an outer diameter of 25 nm and an inner diameter of 15 nM. Alpha-beta heterodimers associate head-to-tail to form protofilaments running lengthwise along the microtubule wall with the beta-tubulin subunit facing the microtubule plus end conferring a structural polarity. Microtubules usually have 13 protofilaments but different protofilament numbers can be found in some organisms and specialized cells. Mg(2+) is required as a cofactor. Post-translationally, undergoes a tyrosination/detyrosination cycle, the cyclic removal and re-addition of a C-terminal tyrosine residue by the enzymes tubulin tyrosine carboxypeptidase (TTCP) and tubulin tyrosine ligase (TTL), respectively.

The protein resides in the cytoplasm. It localises to the cytoskeleton. It carries out the reaction GTP + H2O = GDP + phosphate + H(+). Its function is as follows. Tubulin is the major constituent of microtubules, a cylinder consisting of laterally associated linear protofilaments composed of alpha- and beta-tubulin heterodimers. Microtubules grow by the addition of GTP-tubulin dimers to the microtubule end, where a stabilizing cap forms. Below the cap, tubulin dimers are in GDP-bound state, owing to GTPase activity of alpha-tubulin. This chain is Tubulin alpha-6 chain (TUBA6), found in Zea mays (Maize).